The primary structure comprises 339 residues: Ketol-acid reductoisomerase (NADP(+)) (339 aa).

A KARI N-terminal Rossmann domain is found at 1–182 (MRVYYDRDAD…GGGRSGIIET (182 aa)). Residues 24–27 (YGSQ), K48, S51, T53, and 83–86 (DELQ) each bind NADP(+). H108 is a catalytic residue. G134 lines the NADP(+) pocket. Positions 183–328 (NFREECETDL…AKLRAMMPWI (146 aa)) constitute a KARI C-terminal knotted domain. Mg(2+) contacts are provided by D191, E195, E227, and E231. S252 lines the substrate pocket.

The protein belongs to the ketol-acid reductoisomerase family. Mg(2+) serves as cofactor.

The enzyme catalyses (2R)-2,3-dihydroxy-3-methylbutanoate + NADP(+) = (2S)-2-acetolactate + NADPH + H(+). The catalysed reaction is (2R,3R)-2,3-dihydroxy-3-methylpentanoate + NADP(+) = (S)-2-ethyl-2-hydroxy-3-oxobutanoate + NADPH + H(+). The protein operates within amino-acid biosynthesis; L-isoleucine biosynthesis; L-isoleucine from 2-oxobutanoate: step 2/4. It participates in amino-acid biosynthesis; L-valine biosynthesis; L-valine from pyruvate: step 2/4. In terms of biological role, involved in the biosynthesis of branched-chain amino acids (BCAA). Catalyzes an alkyl-migration followed by a ketol-acid reduction of (S)-2-acetolactate (S2AL) to yield (R)-2,3-dihydroxy-isovalerate. In the isomerase reaction, S2AL is rearranged via a Mg-dependent methyl migration to produce 3-hydroxy-3-methyl-2-ketobutyrate (HMKB). In the reductase reaction, this 2-ketoacid undergoes a metal-dependent reduction by NADPH to yield (R)-2,3-dihydroxy-isovalerate. This chain is Ketol-acid reductoisomerase (NADP(+)), found in Mesorhizobium japonicum (strain LMG 29417 / CECT 9101 / MAFF 303099) (Mesorhizobium loti (strain MAFF 303099)).